Consider the following 170-residue polypeptide: MDSSQYMLKATLTQMCLCSRGVRNVHSEHPQQQDSSLTLWRPWLLGAGDRELDGQQRRSGEADGVPTNTGPKGALGFQHPVRLYMPKSKTSEYLQHMGRKVLASFPVQATIHFYNDDSDSEEEDEEEEMEFYNYYQNCAANGVDSSRGSSDNYSVQGGPKRNIGSHAGSA.

Residues 40–43 (WRPW) carry the WRPW motif motif. Over residues 51-61 (ELDGQQRRSGE) the composition is skewed to basic and acidic residues. Residues 51 to 78 (ELDGQQRRSGEADGVPTNTGPKGALGFQ) form a disordered region. Residues 79–114 (HPVRLYMPKSKTSEYLQHMGRKVLASFPVQATIHFY) are ripply homology domain. Over residues 142 to 155 (GVDSSRGSSDNYSV) the composition is skewed to polar residues. Residues 142 to 170 (GVDSSRGSSDNYSVQGGPKRNIGSHAGSA) are disordered.

This sequence belongs to the ripply family. As to quaternary structure, interacts with tbx1 and tle4/grg4. In terms of tissue distribution, at neurula stage, expressed in the region close to the heart mesoderm. At the tailbud stage, expressed in the pharyngeal region.

Its subcellular location is the nucleus. In terms of biological role, acts as a transcriptional corepressor. Negative regulator of the transcriptional activity of tbx1 that plays a key role in pharyngeal development. Plays a role in the formation of the anteroposterior (AP) axis during embryonic development; required to establish the posterolateral border of the pre-placodal ectoderm (PPE) acting downstream of the retinoic acid receptor (RAR) signaling. The protein is Protein ripply3 (ripply3) of Xenopus laevis (African clawed frog).